Reading from the N-terminus, the 135-residue chain is ATP synthase epsilon chain (135 aa).

The protein belongs to the ATPase epsilon chain family. In terms of assembly, F-type ATPases have 2 components, CF(1) - the catalytic core - and CF(0) - the membrane proton channel. CF(1) has five subunits: alpha(3), beta(3), gamma(1), delta(1), epsilon(1). CF(0) has three main subunits: a, b and c.

It is found in the cell inner membrane. Functionally, produces ATP from ADP in the presence of a proton gradient across the membrane. This Allorhizobium ampelinum (strain ATCC BAA-846 / DSM 112012 / S4) (Agrobacterium vitis (strain S4)) protein is ATP synthase epsilon chain.